The chain runs to 137 residues: ATP synthase epsilon chain (137 aa).

The protein belongs to the ATPase epsilon chain family. As to quaternary structure, F-type ATPases have 2 components, CF(1) - the catalytic core - and CF(0) - the membrane proton channel. CF(1) has five subunits: alpha(3), beta(3), gamma(1), delta(1), epsilon(1). CF(0) has three main subunits: a, b and c.

The protein resides in the cellular thylakoid membrane. Its function is as follows. Produces ATP from ADP in the presence of a proton gradient across the membrane. The polypeptide is ATP synthase epsilon chain (Trichodesmium erythraeum (strain IMS101)).